The primary structure comprises 164 residues: Anterior gradient protein 3 (164 aa).

An N-terminal signal peptide occupies residues 1 to 19 (MYFPMIELTLVLLASSNLA). A Prevents secretion from ER motif is present at residues 161 to 164 (QTEL).

This sequence belongs to the AGR family.

Its subcellular location is the endoplasmic reticulum. It localises to the cytoplasm. In terms of biological role, required for calcium-mediated regulation of ciliary beat frequency in the airway. The polypeptide is Anterior gradient protein 3 (Xenopus tropicalis (Western clawed frog)).